The following is a 151-amino-acid chain: Deoxyuridine 5'-triphosphate nucleotidohydrolase (151 aa).

Substrate contacts are provided by residues 70–72 (RSG), N83, 87–89 (LID), and M97.

The protein belongs to the dUTPase family. The cofactor is Mg(2+).

The catalysed reaction is dUTP + H2O = dUMP + diphosphate + H(+). It functions in the pathway pyrimidine metabolism; dUMP biosynthesis; dUMP from dCTP (dUTP route): step 2/2. Functionally, this enzyme is involved in nucleotide metabolism: it produces dUMP, the immediate precursor of thymidine nucleotides and it decreases the intracellular concentration of dUTP so that uracil cannot be incorporated into DNA. In Yersinia enterocolitica serotype O:8 / biotype 1B (strain NCTC 13174 / 8081), this protein is Deoxyuridine 5'-triphosphate nucleotidohydrolase.